We begin with the raw amino-acid sequence, 95 residues long: MSVDLATVKRVAHLARIAVSEDEANRMVGELNGILGFVEQLSEVNVDGVEAMTSVTPMAMKKRTDEVTDGSKAADIVANAPVTDHNFFLVPKVVE.

The protein belongs to the GatC family. In terms of assembly, heterotrimer of A, B and C subunits.

The enzyme catalyses L-glutamyl-tRNA(Gln) + L-glutamine + ATP + H2O = L-glutaminyl-tRNA(Gln) + L-glutamate + ADP + phosphate + H(+). It carries out the reaction L-aspartyl-tRNA(Asn) + L-glutamine + ATP + H2O = L-asparaginyl-tRNA(Asn) + L-glutamate + ADP + phosphate + 2 H(+). Its function is as follows. Allows the formation of correctly charged Asn-tRNA(Asn) or Gln-tRNA(Gln) through the transamidation of misacylated Asp-tRNA(Asn) or Glu-tRNA(Gln) in organisms which lack either or both of asparaginyl-tRNA or glutaminyl-tRNA synthetases. The reaction takes place in the presence of glutamine and ATP through an activated phospho-Asp-tRNA(Asn) or phospho-Glu-tRNA(Gln). The chain is Aspartyl/glutamyl-tRNA(Asn/Gln) amidotransferase subunit C from Rhizobium leguminosarum bv. trifolii (strain WSM2304).